The following is a 40-amino-acid chain: uncharacterized protein (40 aa).

Residues 20 to 37 (TYLYWTAVTAAYLTYLTI) form a helical membrane-spanning segment.

The protein resides in the membrane. This is an uncharacterized protein from Archaeoglobus fulgidus (strain ATCC 49558 / DSM 4304 / JCM 9628 / NBRC 100126 / VC-16).